Consider the following 300-residue polypeptide: tRNA-cytidine(32) 2-sulfurtransferase (300 aa).

The PP-loop motif motif lies at 57–62; that stretch reads SGGKDS. [4Fe-4S] cluster is bound by residues Cys-132, Cys-135, and Cys-223.

This sequence belongs to the TtcA family. As to quaternary structure, homodimer. It depends on Mg(2+) as a cofactor. The cofactor is [4Fe-4S] cluster.

It is found in the cytoplasm. It carries out the reaction cytidine(32) in tRNA + S-sulfanyl-L-cysteinyl-[cysteine desulfurase] + AH2 + ATP = 2-thiocytidine(32) in tRNA + L-cysteinyl-[cysteine desulfurase] + A + AMP + diphosphate + H(+). It participates in tRNA modification. Catalyzes the ATP-dependent 2-thiolation of cytidine in position 32 of tRNA, to form 2-thiocytidine (s(2)C32). The sulfur atoms are provided by the cysteine/cysteine desulfurase (IscS) system. The protein is tRNA-cytidine(32) 2-sulfurtransferase of Xanthomonas campestris pv. campestris (strain B100).